Reading from the N-terminus, the 507-residue chain is Histidine ammonia-lyase (507 aa).

Positions Ala141–Gly143 form a cross-link, 5-imidazolinone (Ala-Gly). Ser142 is subject to 2,3-didehydroalanine (Ser).

The protein belongs to the PAL/histidase family. Post-translationally, contains an active site 4-methylidene-imidazol-5-one (MIO), which is formed autocatalytically by cyclization and dehydration of residues Ala-Ser-Gly.

The protein resides in the cytoplasm. It carries out the reaction L-histidine = trans-urocanate + NH4(+). It functions in the pathway amino-acid degradation; L-histidine degradation into L-glutamate; N-formimidoyl-L-glutamate from L-histidine: step 1/3. The polypeptide is Histidine ammonia-lyase (Cereibacter sphaeroides (strain ATCC 17029 / ATH 2.4.9) (Rhodobacter sphaeroides)).